Consider the following 249-residue polypeptide: NAD(P)H-hydrate epimerase (249 aa).

The 223-residue stretch at 11–233 (AQQIDVELMS…ELGKKHELNI (223 aa)) folds into the YjeF N-terminal domain. 62–66 (NQGGD) serves as a coordination point for (6S)-NADPHX. Glutamine 63 and aspartate 127 together coordinate K(+). Residues 131-137 (GFSFQPP) and aspartate 162 contribute to the (6S)-NADPHX site. Serine 165 provides a ligand contact to K(+).

The protein belongs to the NnrE/AIBP family. The cofactor is K(+).

The protein localises to the cytoplasm. Its subcellular location is the mitochondrion. The catalysed reaction is (6R)-NADHX = (6S)-NADHX. It carries out the reaction (6R)-NADPHX = (6S)-NADPHX. Catalyzes the epimerization of the S- and R-forms of NAD(P)HX, a damaged form of NAD(P)H that is a result of enzymatic or heat-dependent hydration. This is a prerequisite for the S-specific NAD(P)H-hydrate dehydratase to allow the repair of both epimers of NAD(P)HX. This chain is NAD(P)H-hydrate epimerase, found in Cryptococcus neoformans var. neoformans serotype D (strain JEC21 / ATCC MYA-565) (Filobasidiella neoformans).